A 300-amino-acid chain; its full sequence is MKQYLITGGTGMVGSQLVNEIKKSDSHITILTRHDQISNDKKISYVNWAKSGWEHKVPQNIDVVINLAGATLNKRWTPEYKQTLMLSRIQSTQALYELFKSRNKAPKVLFNASATGYYPPDLFMSYTEVYKTLPFDFLSDIVYQWERFAQQFEQLGTRVVIGRFGIILSNEGGALQTMKLPYEYYIGGKLGSGQQWYSWIHINDLIQAILFLINNESASGPFNLTAPIPERQNLFGYTLARAMHKPHETWAPSLAMRLILGQMSTVVLDTQKVLPNKIQALGFQFKYSNLKIALEDLISK.

Belongs to the NAD(P)-dependent epimerase/dehydratase family. SDR39U1 subfamily.

The polypeptide is Epimerase family protein SAB0724c (Staphylococcus aureus (strain bovine RF122 / ET3-1)).